The sequence spans 270 residues: 2-heptyl-3-hydroxy-4-quinolone dioxygenase AqdC2 (270 aa).

Residues 25-156 (PALVLLTGWG…KSARAGLAKS (132 aa)) enclose the AB hydrolase-1 domain. Histidine 99 contacts substrate. The Proton donor/acceptor role is filled by histidine 248.

Belongs to the AB hydrolase superfamily.

It carries out the reaction 2-heptyl-3-hydroxy-4(1H)-quinolone + O2 = N-octanoylanthranilate + CO + H(+). Involved in the degradation of the Pseudomonas aeruginosa quorum sensing signal molecules HHQ (2-heptyl-4-quinolone) and PQS (2-heptyl-3-hydroxy-4-quinolone) to anthranilic acid. Catalyzes the cleavage of PQS to form N-octanoylanthranilic acid and carbon monoxide. This chain is 2-heptyl-3-hydroxy-4-quinolone dioxygenase AqdC2, found in Rhodococcus erythropolis (Arthrobacter picolinophilus).